A 172-amino-acid polypeptide reads, in one-letter code: uncharacterized protein (172 aa).

Transmembrane regions (helical) follow at residues 44 to 68 (VLVS…AALT), 86 to 110 (LASY…VFSL), and 117 to 135 (VVFI…VTLF).

The protein belongs to the chlamydial CPn_0442/CT_006/TC_0274 family.

It is found in the cell membrane. This is an uncharacterized protein from Chlamydia pneumoniae (Chlamydophila pneumoniae).